A 114-amino-acid chain; its full sequence is Putative membrane protein insertion efficiency factor (114 aa).

It belongs to the UPF0161 family.

The protein localises to the cell inner membrane. Could be involved in insertion of integral membrane proteins into the membrane. This Nitrobacter hamburgensis (strain DSM 10229 / NCIMB 13809 / X14) protein is Putative membrane protein insertion efficiency factor.